Reading from the N-terminus, the 596-residue chain is M-phase inducer phosphatase (596 aa).

Phosphoserine is present on residues S99 and S178. The segment at 174 to 221 (LSSSSFDSYLRPNVSRSRSSGNAPPFLRSRSSSSYSINKKKGTSGGQA) is disordered. Residues 429–533 (IFDKCIIIDC…FYENHKNRCD (105 aa)) enclose the Rhodanese domain. The active-site Phosphocysteine intermediate is C480.

Belongs to the MPI phosphatase family. Interacts with rad24 during G2 in a srk1-dependent manner; the interaction is increased during osmostress. Post-translationally, phosphorylated by srk1 in the N-terminus; phosphorylation promotes nuclear exclusion.

The protein localises to the cytoplasm. Its subcellular location is the nucleus. The catalysed reaction is O-phospho-L-tyrosyl-[protein] + H2O = L-tyrosyl-[protein] + phosphate. Functionally, tyrosine protein phosphatase which functions as a dosage-dependent inducer of mitotic and meiotic progression. Directly dephosphorylates cdc2 and stimulates its kinase activity. Required for the G2/M transition of the cell cycle. Required for induction of meiosis II. The protein is M-phase inducer phosphatase of Schizosaccharomyces pombe (strain 972 / ATCC 24843) (Fission yeast).